The primary structure comprises 66 residues: FMRFamide-like neuropeptide 21 (66 aa).

The signal sequence occupies residues 1 to 16 (MRLFILLSCLLAWVLA).

Belongs to the FARP (FMRFamide related peptide) family. In terms of processing, may be processed by convertase egl-3. Expressed in the ADL, ASE and ASH sensory neurons, the URA motor neurons and the MC, M2 and M4 pharyngeal neurons.

The protein localises to the secreted. Functionally, FMRFamide-like neuropeptide. Involved in modulating locomotion quiescence during the sleep-like state called lethargus which occurs during molting between larval and adult stages, acting via the G-protein coupled receptor npr-1. Plays a role in modulating social and feeding behavior. Ligand to G-protein coupled receptor npr-1. This Caenorhabditis elegans protein is FMRFamide-like neuropeptide 21.